Reading from the N-terminus, the 264-residue chain is Thymidylate synthase (264 aa).

DUMP is bound by residues Arg21 and 126-127 (RR). Residue Cys146 is the Nucleophile of the active site. Residues 166–169 (RSAD), Asn177, and 207–209 (HLY) each bind dUMP. Asp169 provides a ligand contact to (6R)-5,10-methylene-5,6,7,8-tetrahydrofolate. Position 263 (Ala263) interacts with (6R)-5,10-methylene-5,6,7,8-tetrahydrofolate.

It belongs to the thymidylate synthase family. Bacterial-type ThyA subfamily. In terms of assembly, homodimer.

Its subcellular location is the cytoplasm. It catalyses the reaction dUMP + (6R)-5,10-methylene-5,6,7,8-tetrahydrofolate = 7,8-dihydrofolate + dTMP. The protein operates within pyrimidine metabolism; dTTP biosynthesis. Functionally, catalyzes the reductive methylation of 2'-deoxyuridine-5'-monophosphate (dUMP) to 2'-deoxythymidine-5'-monophosphate (dTMP) while utilizing 5,10-methylenetetrahydrofolate (mTHF) as the methyl donor and reductant in the reaction, yielding dihydrofolate (DHF) as a by-product. This enzymatic reaction provides an intracellular de novo source of dTMP, an essential precursor for DNA biosynthesis. This Halorhodospira halophila (strain DSM 244 / SL1) (Ectothiorhodospira halophila (strain DSM 244 / SL1)) protein is Thymidylate synthase.